The chain runs to 167 residues: CDP-archaeol synthase (167 aa).

The next 5 helical transmembrane spans lie at 4-24 (ILEA…PVIL), 51-71 (GFLG…IIYP), 80-100 (FKVS…GSFI), 104-124 (LNLP…LISA), and 139-158 (VLLL…VLAY).

It belongs to the CDP-archaeol synthase family. Requires Mg(2+) as cofactor.

It is found in the cell membrane. The catalysed reaction is 2,3-bis-O-(geranylgeranyl)-sn-glycerol 1-phosphate + CTP + H(+) = CDP-2,3-bis-O-(geranylgeranyl)-sn-glycerol + diphosphate. The protein operates within membrane lipid metabolism; glycerophospholipid metabolism. Its function is as follows. Catalyzes the formation of CDP-2,3-bis-(O-geranylgeranyl)-sn-glycerol (CDP-archaeol) from 2,3-bis-(O-geranylgeranyl)-sn-glycerol 1-phosphate (DGGGP) and CTP. This reaction is the third ether-bond-formation step in the biosynthesis of archaeal membrane lipids. The chain is CDP-archaeol synthase from Pyrococcus furiosus (strain ATCC 43587 / DSM 3638 / JCM 8422 / Vc1).